The primary structure comprises 211 residues: Endonuclease III (211 aa).

A HhH domain is found at 108-127; sequence RAALEALPGVGRKTANVVLN. The [4Fe-4S] cluster site is built by C187, C194, C197, and C203.

This sequence belongs to the Nth/MutY family. [4Fe-4S] cluster is required as a cofactor.

The catalysed reaction is 2'-deoxyribonucleotide-(2'-deoxyribose 5'-phosphate)-2'-deoxyribonucleotide-DNA = a 3'-end 2'-deoxyribonucleotide-(2,3-dehydro-2,3-deoxyribose 5'-phosphate)-DNA + a 5'-end 5'-phospho-2'-deoxyribonucleoside-DNA + H(+). Functionally, DNA repair enzyme that has both DNA N-glycosylase activity and AP-lyase activity. The DNA N-glycosylase activity releases various damaged pyrimidines from DNA by cleaving the N-glycosidic bond, leaving an AP (apurinic/apyrimidinic) site. The AP-lyase activity cleaves the phosphodiester bond 3' to the AP site by a beta-elimination, leaving a 3'-terminal unsaturated sugar and a product with a terminal 5'-phosphate. The protein is Endonuclease III of Escherichia coli O6:H1 (strain CFT073 / ATCC 700928 / UPEC).